The primary structure comprises 293 residues: Urease accessory protein UreD (293 aa).

Residues 1–22 (MAVAQQAWSPGADPAPSAAPVS) are disordered. A compositionally biased stretch (low complexity) spans 7 to 22 (AWSPGADPAPSAAPVS).

The protein belongs to the UreD family. As to quaternary structure, ureD, UreF and UreG form a complex that acts as a GTP-hydrolysis-dependent molecular chaperone, activating the urease apoprotein by helping to assemble the nickel containing metallocenter of UreC. The UreE protein probably delivers the nickel.

The protein resides in the cytoplasm. In terms of biological role, required for maturation of urease via the functional incorporation of the urease nickel metallocenter. The polypeptide is Urease accessory protein UreD (Alkalilimnicola ehrlichii (strain ATCC BAA-1101 / DSM 17681 / MLHE-1)).